The primary structure comprises 180 residues: Oligoribonuclease (180 aa).

Residues leucine 7–leucine 170 enclose the Exonuclease domain. Residue tyrosine 128 is part of the active site.

It belongs to the oligoribonuclease family.

It is found in the cytoplasm. 3'-to-5' exoribonuclease specific for small oligoribonucleotides. The chain is Oligoribonuclease from Ruthia magnifica subsp. Calyptogena magnifica.